A 247-amino-acid polypeptide reads, in one-letter code: Probable transcriptional regulatory protein PBPRA1113 (247 aa).

It belongs to the TACO1 family.

The protein localises to the cytoplasm. The protein is Probable transcriptional regulatory protein PBPRA1113 of Photobacterium profundum (strain SS9).